A 471-amino-acid polypeptide reads, in one-letter code: Probable ribonuclease FAU-1 (471 aa).

The protein belongs to the FAU-1 family.

Its function is as follows. Probable RNase involved in rRNA stability through maturation and/or degradation of precursor rRNAs. Binds to RNA in loop regions with AU-rich sequences. This Caldivirga maquilingensis (strain ATCC 700844 / DSM 13496 / JCM 10307 / IC-167) protein is Probable ribonuclease FAU-1.